A 353-amino-acid chain; its full sequence is MSHILDKIETVYPFPPKPIPLSQEEKADYIERIKKLLKEKDAVLIAHYYTDPEIQALAEETGGFVGDSLEMAKFGNRHPASTLIIGGVRFMGESAKILTPEKRILMPTLEAECSLDLGCPADKFSEFCDAHPDHTVVVYANTSAAVKARADWVVTSSIALDIVEHLDAEDKPIIWGPDRHLGSYIAKKTGADMLLWHAECVVHDEFSADALRKMKNVYPDAAILVHPESPASVVELADAVGSTSQLIKAAKELPQQQMIVATDKGIFFKMQQLVPEKELIEAPTAGAGATCRSCAHCPWMAMNGLKAIEKALSEGGAEHEIFVDEALRVKSLIPLNRMLDFAEQLNMQVKGNA.

The iminosuccinate site is built by H47 and S68. [4Fe-4S] cluster is bound at residue C113. Iminosuccinate contacts are provided by residues 139–141 and S156; that span reads YAN. C200 is a [4Fe-4S] cluster binding site. Residues 226–228 and T243 contribute to the iminosuccinate site; that span reads HPE. Residue C297 participates in [4Fe-4S] cluster binding.

This sequence belongs to the quinolinate synthase family. Type 1 subfamily. It depends on [4Fe-4S] cluster as a cofactor.

It is found in the cytoplasm. It carries out the reaction iminosuccinate + dihydroxyacetone phosphate = quinolinate + phosphate + 2 H2O + H(+). The protein operates within cofactor biosynthesis; NAD(+) biosynthesis; quinolinate from iminoaspartate: step 1/1. Its function is as follows. Catalyzes the condensation of iminoaspartate with dihydroxyacetone phosphate to form quinolinate. This is Quinolinate synthase from Vibrio campbellii (strain ATCC BAA-1116).